A 163-amino-acid polypeptide reads, in one-letter code: Transcription antitermination protein NusB (163 aa).

The protein belongs to the NusB family.

Functionally, involved in transcription antitermination. Required for transcription of ribosomal RNA (rRNA) genes. Binds specifically to the boxA antiterminator sequence of the ribosomal RNA (rrn) operons. The chain is Transcription antitermination protein NusB from Granulibacter bethesdensis (strain ATCC BAA-1260 / CGDNIH1).